Here is an 863-residue protein sequence, read N- to C-terminus: Penicillin-binding protein 1A (863 aa).

The Cytoplasmic segment spans residues 1 to 28 (MTENRDNKTSQSEKTTQKKKKKKFKAFK). Residues 29-49 (IILITFITLIVISLVTAIGIT) traverse the membrane as a helical; Signal-anchor for type II membrane protein segment. Residues 50–863 (LAIIKTSPDI…KPIIRPKKHF (814 aa)) are Extracellular-facing. Residues 71–248 (SKIYDDKGEL…PSVYYPYSRT (178 aa)) form a transglycosylase region. The active-site Proton donor; for transglycosylase activity is E110. Residues 392 to 674 (ASAVLTDYHT…AAALFGKIMN (283 aa)) form a transpeptidase region. The active-site Acyl-ester intermediate; for transpeptidase activity is S431. Residues 774 to 863 (DDDMYVLPDK…KPIIRPKKHF (90 aa)) form a disordered region. Over residues 808-836 (EDATNEASTEPSPNTDTVPEDSTNNLDPT) the composition is skewed to polar residues. The span at 837-846 (KNTEKKPSDK) shows a compositional bias: basic and acidic residues. The segment covering 847 to 863 (KNKKHVIKPIIRPKKHF) has biased composition (basic residues).

The protein in the N-terminal section; belongs to the glycosyltransferase 51 family. This sequence in the C-terminal section; belongs to the transpeptidase family.

The protein localises to the cell membrane. The enzyme catalyses [GlcNAc-(1-&gt;4)-Mur2Ac(oyl-L-Ala-gamma-D-Glu-L-Lys-D-Ala-D-Ala)](n)-di-trans,octa-cis-undecaprenyl diphosphate + beta-D-GlcNAc-(1-&gt;4)-Mur2Ac(oyl-L-Ala-gamma-D-Glu-L-Lys-D-Ala-D-Ala)-di-trans,octa-cis-undecaprenyl diphosphate = [GlcNAc-(1-&gt;4)-Mur2Ac(oyl-L-Ala-gamma-D-Glu-L-Lys-D-Ala-D-Ala)](n+1)-di-trans,octa-cis-undecaprenyl diphosphate + di-trans,octa-cis-undecaprenyl diphosphate + H(+). The catalysed reaction is Preferential cleavage: (Ac)2-L-Lys-D-Ala-|-D-Ala. Also transpeptidation of peptidyl-alanyl moieties that are N-acyl substituents of D-alanine.. The protein operates within cell wall biogenesis; peptidoglycan biosynthesis. Functionally, cell wall formation. Synthesis of cross-linked peptidoglycan from the lipid intermediates. The enzyme has a penicillin-insensitive transglycosylase N-terminal domain (formation of linear glycan strands) and a penicillin-sensitive transpeptidase C-terminal domain (cross-linking of the peptide subunits). The protein is Penicillin-binding protein 1A (pbpA) of Clostridium novyi (strain NT).